We begin with the raw amino-acid sequence, 308 residues long: Elongation factor Ts (308 aa).

The segment at 80-83 (TDFV) is involved in Mg(2+) ion dislocation from EF-Tu.

Belongs to the EF-Ts family.

It is found in the cytoplasm. Its function is as follows. Associates with the EF-Tu.GDP complex and induces the exchange of GDP to GTP. It remains bound to the aminoacyl-tRNA.EF-Tu.GTP complex up to the GTP hydrolysis stage on the ribosome. This chain is Elongation factor Ts, found in Rhizobium rhizogenes (strain K84 / ATCC BAA-868) (Agrobacterium radiobacter).